The sequence spans 477 residues: UDP-N-acetylmuramate--L-alanine ligase (477 aa).

Residue 120 to 126 coordinates ATP; the sequence is GSHGKTT.

Belongs to the MurCDEF family.

It is found in the cytoplasm. The enzyme catalyses UDP-N-acetyl-alpha-D-muramate + L-alanine + ATP = UDP-N-acetyl-alpha-D-muramoyl-L-alanine + ADP + phosphate + H(+). It participates in cell wall biogenesis; peptidoglycan biosynthesis. Its function is as follows. Cell wall formation. This chain is UDP-N-acetylmuramate--L-alanine ligase, found in Rickettsia canadensis (strain McKiel).